The sequence spans 377 residues: PqqA peptide cyclase (377 aa).

Residues 12-228 (FGIPLAVLLE…EAARERLKGQ (217 aa)) form the Radical SAM core domain. Cys26, Cys30, and Cys33 together coordinate [4Fe-4S] cluster.

Belongs to the radical SAM superfamily. PqqE family. As to quaternary structure, interacts with PqqD. The interaction is necessary for activity of PqqE. It depends on [4Fe-4S] cluster as a cofactor.

It carries out the reaction [PQQ precursor protein] + S-adenosyl-L-methionine = E-Y cross-linked-[PQQ precursor protein] + 5'-deoxyadenosine + L-methionine + H(+). It participates in cofactor biosynthesis; pyrroloquinoline quinone biosynthesis. Functionally, catalyzes the cross-linking of a glutamate residue and a tyrosine residue in the PqqA protein as part of the biosynthesis of pyrroloquinoline quinone (PQQ). In Rhodopseudomonas palustris (strain ATCC BAA-98 / CGA009), this protein is PqqA peptide cyclase.